The following is a 468-amino-acid chain: Nuclear distribution protein PAC1-2 (468 aa).

A LisH domain is found at 13 to 45; it reads QAEELHKSIIAYLTSLNLATTANTLRAELNLPE. The stretch at 66–92 forms a coiled coil; the sequence is SVIRLQKKVLDLQAENAHLKNEIENAG. WD repeat units lie at residues 118-159, 161-201, 205-251, 254-293, 298-358, 360-399, 404-429, and 430-468; these read GHRL…RTLK, HTKA…KNIR, GHDH…CVKT, GHNDWPRAVAPSADGRWLLSTGSDKAARLWDIGGTEPECR, GHEN…IKVL, GHDNWVRGLAFHPAGKFLISVADDRTMRCWDLSQDGKCVQ, MFDGFVSCVRWAPGITKDGLAGGDAG, and DGTPKKKTGAEANGGVQMRCVVATGSVDGTEGKVRIFAN.

The protein belongs to the WD repeat LIS1/nudF family. Self-associates. Interacts with NDL1 and dynein.

The protein localises to the cytoplasm. Its subcellular location is the cytoskeleton. It is found in the spindle pole. Positively regulates the activity of the minus-end directed microtubule motor protein dynein. May enhance dynein-mediated microtubule sliding by targeting dynein to the microtubule plus end. Required for nuclear migration during vegetative growth as well as development. Required for retrograde early endosome (EE) transport from the hyphal tip. Required for localization of dynein to the mitotic spindle poles. Recruits additional proteins to the dynein complex at SPBs. The sequence is that of Nuclear distribution protein PAC1-2 from Podospora anserina (strain S / ATCC MYA-4624 / DSM 980 / FGSC 10383) (Pleurage anserina).